Reading from the N-terminus, the 187-residue chain is Peptidyl-tRNA hydrolase (187 aa).

Tyr-16 contacts tRNA. His-21 serves as the catalytic Proton acceptor. Tyr-66, Asn-68, and Asn-114 together coordinate tRNA.

The protein belongs to the PTH family. As to quaternary structure, monomer.

It localises to the cytoplasm. The enzyme catalyses an N-acyl-L-alpha-aminoacyl-tRNA + H2O = an N-acyl-L-amino acid + a tRNA + H(+). Hydrolyzes ribosome-free peptidyl-tRNAs (with 1 or more amino acids incorporated), which drop off the ribosome during protein synthesis, or as a result of ribosome stalling. Its function is as follows. Catalyzes the release of premature peptidyl moieties from peptidyl-tRNA molecules trapped in stalled 50S ribosomal subunits, and thus maintains levels of free tRNAs and 50S ribosomes. In Malacoplasma penetrans (strain HF-2) (Mycoplasma penetrans), this protein is Peptidyl-tRNA hydrolase.